Here is a 141-residue protein sequence, read N- to C-terminus: N,N-dimethylformamidase alpha subunit (141 aa).

As to quaternary structure, heterotetramer of two DmfA1 (alpha) and two DmfA2 (beta) subunits.

The catalysed reaction is N,N-dimethylformamide + H2O = dimethylamine + formate. In terms of biological role, hydrolyzes N,N-dimethylformamide, and to a lesser extent N,N-dimethylacetamide and N,N-diethylacetamide. Has no activity against the substituted amides N-methylformamide, N-ethylformamide, N-ethylformamide and N-methylacetamide or the unsubstituted amides formamide, nicotinamide, acetoamide, benzamide, acetamide and acrylamide. In Paracoccus aminophilus, this protein is N,N-dimethylformamidase alpha subunit.